Reading from the N-terminus, the 527-residue chain is Cytokinin dehydrogenase 6 (527 aa).

The N-terminal stretch at 1–22 (MAARCSIAFMVMASCLSVVVSG) is a signal peptide. The FAD-binding PCMH-type domain maps to 55–236 (VAAAPEAVLH…TRARIGLEPA (182 aa)). FAD-binding residues include glycine 91 and glycine 93. Residue histidine 94 is modified to Pros-8alpha-FAD histidine. FAD-binding residues include serine 95 and glutamine 99. An N-linked (GlcNAc...) asparagine glycan is attached at asparagine 121. Positions 160, 165, 171, 175, and 226 each coordinate FAD. Residues asparagine 280 and asparagine 323 are each glycosylated (N-linked (GlcNAc...) asparagine). Tyrosine 475, serine 510, and glutamine 513 together coordinate FAD.

Belongs to the oxygen-dependent FAD-linked oxidoreductase family. As to quaternary structure, monomer. The cofactor is FAD.

Its subcellular location is the secreted. It is found in the extracellular space. It carries out the reaction N(6)-dimethylallyladenine + A + H2O = 3-methyl-2-butenal + adenine + AH2. Catalyzes the oxidation of cytokinins, a family of N(6)-substituted adenine derivatives that are plant hormones, where the substituent is an isopentenyl group. The sequence is that of Cytokinin dehydrogenase 6 (CKX6) from Oryza sativa subsp. japonica (Rice).